A 112-amino-acid polypeptide reads, in one-letter code: Large ribosomal subunit protein uL18 (112 aa).

Belongs to the universal ribosomal protein uL18 family. Part of the 50S ribosomal subunit; part of the 5S rRNA/L5/L18/L25 subcomplex. Contacts the 5S and 23S rRNAs.

Functionally, this is one of the proteins that bind and probably mediate the attachment of the 5S RNA into the large ribosomal subunit, where it forms part of the central protuberance. This is Large ribosomal subunit protein uL18 from Thermus thermophilus (strain ATCC BAA-163 / DSM 7039 / HB27).